We begin with the raw amino-acid sequence, 370 residues long: Pyruvate dehydrogenase E1 component subunit alpha (370 aa).

Heterodimer of an alpha and a beta chain. It depends on thiamine diphosphate as a cofactor.

The enzyme catalyses N(6)-[(R)-lipoyl]-L-lysyl-[protein] + pyruvate + H(+) = N(6)-[(R)-S(8)-acetyldihydrolipoyl]-L-lysyl-[protein] + CO2. Functionally, the pyruvate dehydrogenase complex catalyzes the overall conversion of pyruvate to acetyl-CoA and CO(2). It contains multiple copies of three enzymatic components: pyruvate dehydrogenase (E1), dihydrolipoamide acetyltransferase (E2) and lipoamide dehydrogenase (E3). In Staphylococcus aureus (strain MRSA252), this protein is Pyruvate dehydrogenase E1 component subunit alpha (pdhA).